Here is a 473-residue protein sequence, read N- to C-terminus: UDP-N-acetylmuramate--L-alanine ligase (473 aa).

119-125 (GTHGKTT) serves as a coordination point for ATP.

The protein belongs to the MurCDEF family.

The protein localises to the cytoplasm. The enzyme catalyses UDP-N-acetyl-alpha-D-muramate + L-alanine + ATP = UDP-N-acetyl-alpha-D-muramoyl-L-alanine + ADP + phosphate + H(+). Its pathway is cell wall biogenesis; peptidoglycan biosynthesis. Cell wall formation. In Caulobacter vibrioides (strain NA1000 / CB15N) (Caulobacter crescentus), this protein is UDP-N-acetylmuramate--L-alanine ligase.